The chain runs to 529 residues: UPF0159 protein TC_0921 (529 aa).

ThyX domains lie at 38 to 274 (KGAL…AEPH) and 309 to 511 (KGVK…LKFV).

The protein belongs to the UPF0159 family.

The polypeptide is UPF0159 protein TC_0921 (Chlamydia muridarum (strain MoPn / Nigg)).